The chain runs to 174 residues: Male-enhanced antigen 1 (174 aa).

Disordered stretches follow at residues 1 to 77 and 94 to 123; these read MAAV…PVGD and LHLP…IPMD. Composition is skewed to acidic residues over residues 38–48, 65–77, and 101–110; these read SSEEPEEEQEE, PEQE…PVGD, and LESEDEDEEG. Ser-103 is modified (phosphoserine).

In terms of biological role, may play an important role in spermatogenesis and/or testis development. The chain is Male-enhanced antigen 1 (MEA1) from Sus scrofa (Pig).